Here is a 290-residue protein sequence, read N- to C-terminus: S-methyl-5'-thioadenosine phosphorylase (290 aa).

Phosphate-binding positions include Ser-11, 53-54, and 86-87; these read RH and SA. Met-184 is a binding site for substrate. Residue Thr-185 participates in phosphate binding. A substrate-binding site is contributed by 208–210; sequence DYD.

It belongs to the PNP/MTAP phosphorylase family. MTAP subfamily. As to quaternary structure, homohexamer. Dimer of a homotrimer.

It catalyses the reaction S-methyl-5'-thioadenosine + phosphate = 5-(methylsulfanyl)-alpha-D-ribose 1-phosphate + adenine. It participates in amino-acid biosynthesis; L-methionine biosynthesis via salvage pathway; S-methyl-5-thio-alpha-D-ribose 1-phosphate from S-methyl-5'-thioadenosine (phosphorylase route): step 1/1. In terms of biological role, catalyzes the reversible phosphorylation of S-methyl-5'-thioadenosine (MTA) to adenine and 5-methylthioribose-1-phosphate. Involved in the breakdown of MTA, a major by-product of polyamine biosynthesis. Responsible for the first step in the methionine salvage pathway after MTA has been generated from S-adenosylmethionine. Has broad substrate specificity with 6-aminopurine nucleosides as preferred substrates. This Cereibacter sphaeroides (strain ATCC 17023 / DSM 158 / JCM 6121 / CCUG 31486 / LMG 2827 / NBRC 12203 / NCIMB 8253 / ATH 2.4.1.) (Rhodobacter sphaeroides) protein is S-methyl-5'-thioadenosine phosphorylase.